The following is a 368-amino-acid chain: Propane 2-monooxygenase, hydroxylase component small subunit (368 aa).

Basic and acidic residues predominate over residues Met-1–Phe-17. Positions Met-1–Ser-32 are disordered.

Belongs to the TmoE/XamoE family. The propane 2-monooxygenase multicomponent enzyme system is composed of an electron transfer component and a monooxygenase component interacting with the effector protein MimD. The electron transfer component is composed of a reductase (MimB), and the monooxygenase component is formed by a large subunit (MimA) and a small subunit (MimC). Requires the presence of the chaperonin-like protein MimG to ensure a productive folding, resulting of a soluble MimC, which leads to the active form of MimABCD.

The catalysed reaction is propane + NADH + O2 + H(+) = propan-2-ol + NAD(+) + H2O. It catalyses the reaction acetone + NADH + O2 + H(+) = hydroxyacetone + NAD(+) + H2O. The enzyme catalyses butan-2-one + NADH + O2 + H(+) = 1-hydroxy-2-butanone + NAD(+) + H2O. It carries out the reaction phenol + NADH + O2 + H(+) = hydroquinone + NAD(+) + H2O. In terms of biological role, component of the propane 2-monooxygenase multicomponent enzyme system which is involved in the degradation of propane via the O2-dependent hydroxylation of propane. Also involved in the degradation of acetone via the O2-dependent hydroxylation of acetone. Also able to catalyze the oxidation of phenol, methylethylketone (2-butanone), 1-propanol and 2-propanol. The polypeptide is Propane 2-monooxygenase, hydroxylase component small subunit (Mycolicibacterium smegmatis (strain ATCC 700084 / mc(2)155) (Mycobacterium smegmatis)).